A 534-amino-acid polypeptide reads, in one-letter code: Arginine--tRNA ligase (534 aa).

A 'HIGH' region motif is present at residues alanine 120 to histidine 130.

The protein belongs to the class-I aminoacyl-tRNA synthetase family. In terms of assembly, monomer.

The protein localises to the cytoplasm. It carries out the reaction tRNA(Arg) + L-arginine + ATP = L-arginyl-tRNA(Arg) + AMP + diphosphate. The polypeptide is Arginine--tRNA ligase (Mesomycoplasma hyopneumoniae (strain 7448) (Mycoplasma hyopneumoniae)).